Here is a 328-residue protein sequence, read N- to C-terminus: UPF0252 protein PF0978 (328 aa).

A helical membrane pass occupies residues 3-23; sequence VPLLILLFLVLTSGCIAPSTP.

Belongs to the UPF0252 family.

The protein localises to the membrane. In Pyrococcus furiosus (strain ATCC 43587 / DSM 3638 / JCM 8422 / Vc1), this protein is UPF0252 protein PF0978.